We begin with the raw amino-acid sequence, 468 residues long: Probable Xaa-Pro aminopeptidase pepP (468 aa).

Mn(2+) is bound by residues aspartate 264, aspartate 275, glutamate 398, and glutamate 438.

This sequence belongs to the peptidase M24B family. It depends on Mn(2+) as a cofactor.

The catalysed reaction is Release of any N-terminal amino acid, including proline, that is linked to proline, even from a dipeptide or tripeptide.. Functionally, catalyzes the removal of a penultimate prolyl residue from the N-termini of peptides. This is Probable Xaa-Pro aminopeptidase pepP (pepP) from Talaromyces stipitatus (strain ATCC 10500 / CBS 375.48 / QM 6759 / NRRL 1006) (Penicillium stipitatum).